Here is a 446-residue protein sequence, read N- to C-terminus: N-succinylarginine dihydrolase (446 aa).

Substrate contacts are provided by residues 19-28 (AGLSFGNVAS), N110, and 137-138 (HR). E174 is a catalytic residue. R213 provides a ligand contact to substrate. Residue H249 is part of the active site. Substrate is bound by residues D251 and N364. C370 acts as the Nucleophile in catalysis.

The protein belongs to the succinylarginine dihydrolase family. As to quaternary structure, homodimer.

It carries out the reaction N(2)-succinyl-L-arginine + 2 H2O + 2 H(+) = N(2)-succinyl-L-ornithine + 2 NH4(+) + CO2. Its pathway is amino-acid degradation; L-arginine degradation via AST pathway; L-glutamate and succinate from L-arginine: step 2/5. In terms of biological role, catalyzes the hydrolysis of N(2)-succinylarginine into N(2)-succinylornithine, ammonia and CO(2). The protein is N-succinylarginine dihydrolase of Burkholderia multivorans (strain ATCC 17616 / 249).